The following is a 229-amino-acid chain: Ribonuclease 3 (229 aa).

Residues 2-130 enclose the RNase III domain; it reads FEKLQDVLCY…ILGAIFLDGG (129 aa). Mg(2+) is bound at residue Glu-43. Asp-47 is a catalytic residue. Mg(2+)-binding residues include Asp-116 and Glu-119. Residue Glu-119 is part of the active site. The 70-residue stretch at 157–226 folds into the DRBM domain; it reads DAKSTLQELT…AGLALELLEG (70 aa).

It belongs to the ribonuclease III family. In terms of assembly, homodimer. Requires Mg(2+) as cofactor.

It localises to the cytoplasm. It carries out the reaction Endonucleolytic cleavage to 5'-phosphomonoester.. Its function is as follows. Digests double-stranded RNA. Involved in the processing of primary rRNA transcript to yield the immediate precursors to the large and small rRNAs (23S and 16S). Processes some mRNAs, and tRNAs when they are encoded in the rRNA operon. Processes pre-crRNA and tracrRNA of type II CRISPR loci if present in the organism. The chain is Ribonuclease 3 from Oleidesulfovibrio alaskensis (strain ATCC BAA-1058 / DSM 17464 / G20) (Desulfovibrio alaskensis).